Reading from the N-terminus, the 104-residue chain is Large ribosomal subunit protein eL31 (104 aa).

Belongs to the eukaryotic ribosomal protein eL31 family.

The chain is Large ribosomal subunit protein eL31 (rpl31e) from Aeropyrum pernix (strain ATCC 700893 / DSM 11879 / JCM 9820 / NBRC 100138 / K1).